Consider the following 400-residue polypeptide: Tryptophan synthase beta chain (400 aa).

K90 is subject to N6-(pyridoxal phosphate)lysine.

The protein belongs to the TrpB family. In terms of assembly, tetramer of two alpha and two beta chains. It depends on pyridoxal 5'-phosphate as a cofactor.

The enzyme catalyses (1S,2R)-1-C-(indol-3-yl)glycerol 3-phosphate + L-serine = D-glyceraldehyde 3-phosphate + L-tryptophan + H2O. The protein operates within amino-acid biosynthesis; L-tryptophan biosynthesis; L-tryptophan from chorismate: step 5/5. Its function is as follows. The beta subunit is responsible for the synthesis of L-tryptophan from indole and L-serine. The polypeptide is Tryptophan synthase beta chain (Alkaliphilus metalliredigens (strain QYMF)).